A 192-amino-acid chain; its full sequence is Ion-translocating oxidoreductase complex subunit A (192 aa).

6 helical membrane-spanning segments follow: residues 5 to 25, 39 to 59, 67 to 87, 102 to 122, 134 to 154, and 171 to 191; these read ILLLVGTVLVNNFVLVKFLGL, IGMGLATTFVLTLASVCAYLV, LGIEYLRTMSFILVIAVVVQF, LLGIFLPLITTNCAVLGVALL, IIYGFGAAVGFSLVLILFASM, and SIAMITAGLMSLAFMGFTGLV.

The protein belongs to the NqrDE/RnfAE family. The complex is composed of six subunits: RnfA, RnfB, RnfC, RnfD, RnfE and RnfG.

It is found in the cell inner membrane. Part of a membrane-bound complex that couples electron transfer with translocation of ions across the membrane. The polypeptide is Ion-translocating oxidoreductase complex subunit A (Vibrio campbellii (strain ATCC BAA-1116)).